The following is a 303-amino-acid chain: N-acetyl-D-glucosamine kinase (303 aa).

ATP contacts are provided by residues Gly-4–Lys-11 and Gly-133–Phe-140. His-157, Cys-177, Cys-179, and Cys-184 together coordinate Zn(2+).

This sequence belongs to the ROK (NagC/XylR) family. NagK subfamily.

It carries out the reaction N-acetyl-D-glucosamine + ATP = N-acetyl-D-glucosamine 6-phosphate + ADP + H(+). The protein operates within cell wall biogenesis; peptidoglycan recycling. In terms of biological role, catalyzes the phosphorylation of N-acetyl-D-glucosamine (GlcNAc) derived from cell-wall degradation, yielding GlcNAc-6-P. The sequence is that of N-acetyl-D-glucosamine kinase from Escherichia coli O9:H4 (strain HS).